The primary structure comprises 94 residues: Large ribosomal subunit protein uL23 (94 aa).

This sequence belongs to the universal ribosomal protein uL23 family. In terms of assembly, part of the 50S ribosomal subunit. Contacts protein L29, and trigger factor when it is bound to the ribosome.

One of the early assembly proteins it binds 23S rRNA. One of the proteins that surrounds the polypeptide exit tunnel on the outside of the ribosome. Forms the main docking site for trigger factor binding to the ribosome. The sequence is that of Large ribosomal subunit protein uL23 from Pelobacter propionicus (strain DSM 2379 / NBRC 103807 / OttBd1).